The chain runs to 169 residues: Holo-[acyl-carrier-protein] synthase (169 aa).

Mg(2+)-binding residues include Asp-8 and Glu-50.

This sequence belongs to the P-Pant transferase superfamily. AcpS family. Mg(2+) is required as a cofactor.

Its subcellular location is the cytoplasm. It catalyses the reaction apo-[ACP] + CoA = holo-[ACP] + adenosine 3',5'-bisphosphate + H(+). Its function is as follows. Transfers the 4'-phosphopantetheine moiety from coenzyme A to a Ser of acyl-carrier-protein. The polypeptide is Holo-[acyl-carrier-protein] synthase (Thermotoga maritima (strain ATCC 43589 / DSM 3109 / JCM 10099 / NBRC 100826 / MSB8)).